We begin with the raw amino-acid sequence, 372 residues long: Actin-related protein 2/3 complex subunit 1B (372 aa).

6 WD repeats span residues 6-45 (FLVEPISCHAWNKDRTQIAICPNNHEVHIYEKSGNKWVQV), 50-89 (EHNGQVTGIDWAPDSNRIVTCGTDRNAYVWTLKGRTWKPT), 94-135 (RINR…WVCK), 140-179 (PIRSTVLSLDWHPNSVLLAAGSCDFKCRIFSAYIKEVEER), 242-280 (SETLPLLAVTFITESSLVAAGHDCFPVLFTYDSAAGKLS), and 324-367 (LHKN…SALK).

Belongs to the WD repeat ARPC1 family. As to quaternary structure, component of the Arp2/3 complex composed of ACTR2/ARP2, ACTR3/ARP3, ARPC1B/p41-ARC, ARPC2/p34-ARC, ARPC3/p21-ARC, ARPC4/p20-ARC and ARPC5/p16-ARC.

Its subcellular location is the cytoplasm. It is found in the cytoskeleton. The protein localises to the nucleus. Its function is as follows. Component of the Arp2/3 complex, a multiprotein complex that mediates actin polymerization upon stimulation by nucleation-promoting factor (NPF). The Arp2/3 complex mediates the formation of branched actin networks in the cytoplasm, providing the force for cell motility. In addition to its role in the cytoplasmic cytoskeleton, the Arp2/3 complex also promotes actin polymerization in the nucleus, thereby regulating gene transcription and repair of damaged DNA. The Arp2/3 complex promotes homologous recombination (HR) repair in response to DNA damage by promoting nuclear actin polymerization, leading to drive motility of double-strand breaks (DSBs). The sequence is that of Actin-related protein 2/3 complex subunit 1B (ARPC1B) from Bos taurus (Bovine).